Here is a 461-residue protein sequence, read N- to C-terminus: RNA-binding protein ZCH321 (461 aa).

C3H1-type zinc fingers lie at residues 63-85 (LCQLFLNGRCRQGTQCHQVHAAL) and 181-208 (ACDFKICGLHTLDRCRYAEECIFLHICK). The segment at 224-243 (TSQARDGGEPGPRGAKKGSV) is disordered. The MKT1-binding motif signature appears at 446–451 (WQHNPY).

RNA-binding protein involved in regulation of mRNA stability. Promotes mRNA stabilization by recruiting MKT1 and PBP1. Stabilizes transcripts encoding mitochondrial proteins. In Trypanosoma brucei brucei (strain 927/4 GUTat10.1), this protein is RNA-binding protein ZCH321.